The sequence spans 162 residues: Succinate dehydrogenase assembly factor 2, mitochondrial (162 aa).

The N-terminal 35 residues, 1–35, are a transit peptide targeting the mitochondrion; the sequence is MHNMFPALTKTLSLQGYKIINSQTGSAAWSCGRRW.

Belongs to the SDHAF2 family. In terms of assembly, interacts with the flavoprotein subunit within the SDH catalytic dimer.

Its subcellular location is the mitochondrion matrix. Its function is as follows. Plays an essential role in the assembly of succinate dehydrogenase (SDH), an enzyme complex (also referred to as respiratory complex II) that is a component of both the tricarboxylic acid (TCA) cycle and the mitochondrial electron transport chain, and which couples the oxidation of succinate to fumarate with the reduction of ubiquinone (coenzyme Q) to ubiquinol. Required for flavinylation (covalent attachment of FAD) of the flavoprotein subunit of the SDH catalytic dimer. The chain is Succinate dehydrogenase assembly factor 2, mitochondrial from Saccharomyces cerevisiae (strain RM11-1a) (Baker's yeast).